The following is a 721-amino-acid chain: Polyribonucleotide nucleotidyltransferase (721 aa).

2 residues coordinate Mg(2+): aspartate 495 and aspartate 501. Residues 562–621 (PRLLSFRIDPELIGTVIGPGGRTIKGITERTNTKIDIEDGGIVTIASHDGAAAEEAQKII) form the KH domain. In terms of domain architecture, S1 motif spans 631 to 699 (GEIFTGVVTR…SRGRINLTLR (69 aa)). A disordered region spans residues 702-721 (SQNSGMSYPEPTPTPVAPLN). Residues 711–721 (EPTPTPVAPLN) show a composition bias toward pro residues.

This sequence belongs to the polyribonucleotide nucleotidyltransferase family. Requires Mg(2+) as cofactor.

Its subcellular location is the cytoplasm. The enzyme catalyses RNA(n+1) + phosphate = RNA(n) + a ribonucleoside 5'-diphosphate. Functionally, involved in mRNA degradation. Catalyzes the phosphorolysis of single-stranded polyribonucleotides processively in the 3'- to 5'-direction. The protein is Polyribonucleotide nucleotidyltransferase of Prochlorococcus marinus (strain MIT 9312).